A 652-amino-acid chain; its full sequence is Acetyl-coenzyme A synthetase (652 aa).

CoA contacts are provided by residues 189-192 (RGGK) and T311. ATP is bound by residues 387 to 389 (GEP), 411 to 416 (DTWWQT), D500, and R515. CoA is bound at residue S523. R526 contacts ATP. The Mg(2+) site is built by V537, H539, and V542. A CoA-binding site is contributed by R584. K609 is subject to N6-acetyllysine.

It belongs to the ATP-dependent AMP-binding enzyme family. Mg(2+) serves as cofactor. In terms of processing, acetylated. Deacetylation by the SIR2-homolog deacetylase activates the enzyme.

It catalyses the reaction acetate + ATP + CoA = acetyl-CoA + AMP + diphosphate. Catalyzes the conversion of acetate into acetyl-CoA (AcCoA), an essential intermediate at the junction of anabolic and catabolic pathways. AcsA undergoes a two-step reaction. In the first half reaction, AcsA combines acetate with ATP to form acetyl-adenylate (AcAMP) intermediate. In the second half reaction, it can then transfer the acetyl group from AcAMP to the sulfhydryl group of CoA, forming the product AcCoA. This is Acetyl-coenzyme A synthetase from Bartonella henselae (strain ATCC 49882 / DSM 28221 / CCUG 30454 / Houston 1) (Rochalimaea henselae).